We begin with the raw amino-acid sequence, 132 residues long: Small ribosomal subunit protein uS8 (132 aa).

This sequence belongs to the universal ribosomal protein uS8 family. In terms of assembly, part of the 30S ribosomal subunit. Contacts proteins S5 and S12.

Its function is as follows. One of the primary rRNA binding proteins, it binds directly to 16S rRNA central domain where it helps coordinate assembly of the platform of the 30S subunit. The sequence is that of Small ribosomal subunit protein uS8 from Rhodopseudomonas palustris (strain BisA53).